The following is an 807-amino-acid chain: DNA gyrase subunit B (807 aa).

Residues Ser429–Pro543 form the Toprim domain. Positions 435, 508, and 510 each coordinate Mg(2+).

The protein belongs to the type II topoisomerase GyrB family. Heterotetramer, composed of two GyrA and two GyrB chains. In the heterotetramer, GyrA contains the active site tyrosine that forms a transient covalent intermediate with DNA, while GyrB binds cofactors and catalyzes ATP hydrolysis. Requires Mg(2+) as cofactor. Mn(2+) serves as cofactor. Ca(2+) is required as a cofactor.

Its subcellular location is the cytoplasm. The enzyme catalyses ATP-dependent breakage, passage and rejoining of double-stranded DNA.. Functionally, a type II topoisomerase that negatively supercoils closed circular double-stranded (ds) DNA in an ATP-dependent manner to modulate DNA topology and maintain chromosomes in an underwound state. Negative supercoiling favors strand separation, and DNA replication, transcription, recombination and repair, all of which involve strand separation. Also able to catalyze the interconversion of other topological isomers of dsDNA rings, including catenanes and knotted rings. Type II topoisomerases break and join 2 DNA strands simultaneously in an ATP-dependent manner. This chain is DNA gyrase subunit B, found in Rickettsia typhi (strain ATCC VR-144 / Wilmington).